A 44-amino-acid polypeptide reads, in one-letter code: Thymosin beta (44 aa).

The span at 1 to 17 (MSDKPDVKEVESFDKTT) shows a compositional bias: basic and acidic residues. The segment at 1 to 44 (MSDKPDVKEVESFDKTTLKKTTTNEKNTLPTKEVIEQEKSGGSD) is disordered. Positions 19-32 (KKTTTNEKNTLPTK) are enriched in low complexity. The span at 33–44 (EVIEQEKSGGSD) shows a compositional bias: basic and acidic residues.

Belongs to the thymosin beta family.

The protein localises to the cytoplasm. The protein resides in the cytoskeleton. Plays an important role in the organization of the cytoskeleton. Binds to and sequesters actin monomers (G actin) and therefore inhibits actin polymerization. In Gillichthys mirabilis (Long-jawed mudsucker), this protein is Thymosin beta.